The sequence spans 982 residues: MSARPFSTPFDRERRVRSTLKKVFGFDSFKTPLQESATMAVVKGAEDVFVCMPTGAGKSLCYQLPALLASGITIVVSPLIALIQDQVDHLLALKVQVSSLNSKLSVQERKELLSDLERDKPRTKLLYITPEMAASASFQPTLNSLVSRNLLSYLVVDEAHCVSQWGHDFRPDYLRLGALRSRLAHAPCVALTATATPQVQEDVFAALHLKQPVASFKTPCFRANLFYDVQFKELIPDVYGNLRDFCLKALGQKAENGSSSGCGIVYCRTREACEQLAIELSSRGVNAKAYHAGLKASDRTQVQNEWMEEKVPVIVATISFGMGVDKANVRFVAHWNIAKSMAGYYQESGRAGRDGKPSWCRLYYSRNDRDQVSFLIRKELAKLQEKRGNKPSDKATLLAFDALVTFCEEVGCRHAAIAKYFGDAPPACAKGCDYCQNPAAITKKLDALERSSSWSKTCIGPSQGNGFDPELYEGGRRGYGGFSRYDEGSGGSGDEGRDEAHKREWNLFYQKQMSLRKGKEPKIEEFTPPDEDCPLREASSRKIPKLTVKAREHCLRLLEEALISNHQAAGSTHGADLQAKAVELEHETFRNAKMVNLYKASVLKKVAEIHKASKDGQLYDMESGTKSCGAAAEFSEPSDYDIPPTSHVYSLKPKRVGAGFSKGPCSFQTATELLGKSHSQKQAPEAMLEGGQEPPGWVCDLQDEDRSKPHPGYQEKALGSSVNCGDPSPEKKTKGSSQGSAKARASKKQQLLATAARKDSQNITRFLCQRTESPPLPASVPRSEDASPSCGDVPGKCTQEVGAQGHLVAVFQTEGPRERPSTCSLRDQSFPEGQPSPLKETQAEKRPRPQQGNPERRAQKRLRPSTKSSILAEAKDSTLASDRSTENKVAQEPCQLSASGTSLREAADIVVRHLTPFYKEGRFISKDLFKGFARHLSHLLAQQLSPGRSVKEEAQSLIKQFFHNRARCESEADWHSLRGPQR.

Residues 39-213 (MAVVKGAEDV…FAALHLKQPV (175 aa)) form the Helicase ATP-binding domain. 52–59 (MPTGAGKS) is a binding site for ATP. The DEAH box signature appears at 157 to 160 (DEAH). Residues 241 to 398 (NLRDFCLKAL…NKPSDKATLL (158 aa)) form the Helicase C-terminal domain. Zn(2+) is bound by residues cysteine 412, cysteine 428, cysteine 432, and cysteine 435. Phosphoserine occurs at positions 489 and 492. The tract at residues 491–621 (GSGDEGRDEA…ASKDGQLYDM (131 aa)) is interaction with POLR2A. Threonine 527 is subject to Phosphothreonine. Residues 653 to 726 (PKRVGAGFSK…ALGSSVNCGD (74 aa)) are interaction with RAD51. 2 disordered regions span residues 675 to 797 (GKSH…PGKC) and 812 to 893 (QTEG…AQEP). Serine 728 carries the post-translational modification Phosphoserine; by CDK1.

The protein belongs to the helicase family. RecQ subfamily. As to quaternary structure, monomer. Interacts with TOP2A, TOP3A and TOP3B. Interacts with RNA polymerase II subunit POLR2A. Identified in a complex with the RNA polymerase II core bound to DNA. Interacts with RAD51. Interacts with WRN; this interaction stimulates WRN helicase activity on DNA fork duplexes. Interacts with MUS1; this interaction promotes MUS81-dependent mitotic DNA synthesis. The cofactor is Zn(2+). In terms of processing, phosphorylated by CDK1 at Ser-728; this phosphorylation is required for RECQL5-mediated disruption of RAD51 filaments on stalled replication forks.

Its subcellular location is the nucleus. It is found in the nucleoplasm. The catalysed reaction is Couples ATP hydrolysis with the unwinding of duplex DNA by translocating in the 3'-5' direction.. The enzyme catalyses ATP + H2O = ADP + phosphate + H(+). In terms of biological role, DNA helicase that plays an important role in DNA replication, transcription and repair. Binds to the RNA polymerase II subunit POLR2A during transcription elongation and suppresses transcription-associated genomic instability. Also associates with POLR1A and enforces the stability of ribosomal DNA arrays. Plays an important role in mitotic chromosome separation after cross-over events and cell cycle progress. Mechanistically, removes RAD51 filaments protecting stalled replication forks at common fragile sites and stimulates MUS81-EME1 endonuclease leading to mitotic DNA synthesis. Required for efficient DNA repair, including repair of inter-strand cross-links. Stimulates DNA decatenation mediated by TOP2A. Prevents sister chromatid exchange and homologous recombination. The chain is ATP-dependent DNA helicase Q5 (Recql5) from Mus musculus (Mouse).